The following is a 435-amino-acid chain: Thiosulfate sulfurtransferase YnjE (435 aa).

An N-terminal signal peptide occupies residues 1 to 23; it reads MKRVSQMTALAMALGLACASSWA. 3 consecutive Rhodanese domains span residues 36–138, 164–270, and 304–425; these read QQQN…RLQK, PAGD…PVER, and HRQD…NPVA. Residue Cys385 is the Cysteine persulfide intermediate of the active site. Arg390 serves as a coordination point for substrate.

Monomer.

The protein localises to the periplasm. The catalysed reaction is thiosulfate + hydrogen cyanide = thiocyanate + sulfite + 2 H(+). This Escherichia coli (strain K12) protein is Thiosulfate sulfurtransferase YnjE (ynjE).